A 656-amino-acid polypeptide reads, in one-letter code: Threonine--tRNA ligase (656 aa).

The region spanning 1–63 is the TGS domain; that stretch reads MAEIQLTFPD…LEDGAIEIIT (63 aa). A catalytic region spans residues 243–541; that stretch reads DHRVIGNQLD…LTEIYKGAFP (299 aa). Zn(2+) is bound by residues Cys-337, His-388, and His-518.

This sequence belongs to the class-II aminoacyl-tRNA synthetase family. As to quaternary structure, homodimer. The cofactor is Zn(2+).

The protein localises to the cytoplasm. It catalyses the reaction tRNA(Thr) + L-threonine + ATP = L-threonyl-tRNA(Thr) + AMP + diphosphate + H(+). Its function is as follows. Catalyzes the attachment of threonine to tRNA(Thr) in a two-step reaction: L-threonine is first activated by ATP to form Thr-AMP and then transferred to the acceptor end of tRNA(Thr). Also edits incorrectly charged L-seryl-tRNA(Thr). The protein is Threonine--tRNA ligase of Latilactobacillus sakei subsp. sakei (strain 23K) (Lactobacillus sakei subsp. sakei).